The chain runs to 503 residues: Probable cytosol aminopeptidase (503 aa).

Mn(2+) is bound by residues Lys270 and Asp275. Residue Lys282 is part of the active site. Mn(2+) is bound by residues Asp293, Asp352, and Glu354. The active site involves Arg356.

The protein belongs to the peptidase M17 family. Mn(2+) is required as a cofactor.

Its subcellular location is the cytoplasm. It catalyses the reaction Release of an N-terminal amino acid, Xaa-|-Yaa-, in which Xaa is preferably Leu, but may be other amino acids including Pro although not Arg or Lys, and Yaa may be Pro. Amino acid amides and methyl esters are also readily hydrolyzed, but rates on arylamides are exceedingly low.. It carries out the reaction Release of an N-terminal amino acid, preferentially leucine, but not glutamic or aspartic acids.. Its function is as follows. Presumably involved in the processing and regular turnover of intracellular proteins. Catalyzes the removal of unsubstituted N-terminal amino acids from various peptides. This is Probable cytosol aminopeptidase from Klebsiella pneumoniae (strain 342).